Reading from the N-terminus, the 351-residue chain is Protein arginine N-methyltransferase 1 (351 aa).

Residues 30 to 331 (KDYYFDSYAH…KNNRDLDFTV (302 aa)) enclose the SAM-dependent MTase PRMT-type domain. S-adenosyl-L-methionine is bound by residues His43, Arg52, Gly76, Glu98, and Glu127. Residues Glu142 and Glu151 contribute to the active site.

This sequence belongs to the class I-like SAM-binding methyltransferase superfamily. Protein arginine N-methyltransferase family. In terms of assembly, homodimer. Homooctamer; individual homodimers associates to form a homooctamer and homooligomerization is required for proper localization to the cell membrane. Individual homodimers can associate to form a homohexamer. Component of a complex with lsm14a/rap55a. Interacts with cirbp.

The protein resides in the nucleus. It localises to the nucleoplasm. It is found in the cytoplasm. The protein localises to the cytosol. It catalyses the reaction L-arginyl-[protein] + 2 S-adenosyl-L-methionine = N(omega),N(omega)-dimethyl-L-arginyl-[protein] + 2 S-adenosyl-L-homocysteine + 2 H(+). It carries out the reaction L-arginyl-[protein] + S-adenosyl-L-methionine = N(omega)-methyl-L-arginyl-[protein] + S-adenosyl-L-homocysteine + H(+). The enzyme catalyses N(omega)-methyl-L-arginyl-[protein] + S-adenosyl-L-methionine = N(omega),N(omega)-dimethyl-L-arginyl-[protein] + S-adenosyl-L-homocysteine + H(+). Its function is as follows. Arginine methyltransferase that methylates (mono and asymmetric dimethylation) the guanidino nitrogens of arginyl residues present in target proteins. Constitutes the main enzyme that mediates monomethylation and asymmetric dimethylation of histone H4 'Arg-3' (H4R3me1 and H4R3me2a, respectively), a specific tag for epigenetic transcriptional activation. Methylates ilf3 to regulate its DNA-binding activity. Required for neural induction, playing a key role in the control of epidermal versus neural cell fate choice. Methylates cirbp to regulate its subcellular location. Acts transiently during metamorphosis as a transcription coactivator, enhancing thyroid hormone (T3) receptor (TR)-mediated transcription by enhancing TR binding to the T3 response element (TRE), and histone modification through recruitment of other coactivators. In Xenopus tropicalis (Western clawed frog), this protein is Protein arginine N-methyltransferase 1.